The chain runs to 4588 residues: Protocadherin Fat 1 (4588 aa).

An N-terminal signal peptide occupies residues 1-21; that stretch reads MGRHLALLLLLLLLFQHFGDS. Residues 22 to 4181 lie on the Extracellular side of the membrane; that stretch reads DGSQRLEQTP…STPWNIGLAE (4160 aa). Cadherin domains are found at residues 35–149 and 150–257; these read THLE…RPLF and SPTS…APVI. Asn-40 is a glycosylation site (N-linked (GlcNAc...) asparagine). N-linked (GlcNAc...) asparagine glycosylation is present at Asn-333. 31 consecutive Cadherin domains span residues 368–463, 464–569, 570–673, 718–822, 823–927, 928–1034, 1035–1139, 1140–1245, 1246–1357, 1359–1456, 1457–1562, 1563–1667, 1668–1765, 1766–1879, 1880–1979, 1980–2081, 2082–2182, 2183–2283, 2284–2390, 2391–2492, 2493–2596, 2597–2703, 2704–2809, 2810–2918, 2919–3023, 3024–3125, 3126–3230, 3231–3335, 3336–3440, 3441–3545, and 3546–3647; these read EKDV…PPEF, TQTA…TPLF, EKIN…VNLQ, STLP…PPEF, LQES…PPTF, IPPN…PPVF, SSFV…APQT, SEPV…KPQF, LQKF…EPIS, EESF…RPQF, STSK…APWF, TASS…SPKF, TSKE…APVF, MQAE…PPVF, AKPL…HLKF, TQDV…APVF, VNLP…MPVF, EKPF…PPVF, AQQS…PPLF, EQQI…SPAF, LQNE…APQF, RATK…LPKF, SEPF…SPVF, ESSP…PPRF, TAEI…SPVC, EKTL…APEF, SADP…PPVF, EYRE…TPVF, SQDT…APVF, SRGN…PPAI, and LPLE…AIRF. Asn-660, Asn-740, and Asn-791 each carry an N-linked (GlcNAc...) asparagine glycan. N-linked (GlcNAc...) asparagine glycosylation occurs at Asn-998. N-linked (GlcNAc...) asparagine glycosylation is found at Asn-1426 and Asn-1551. Residues Asn-1748, Asn-1864, Asn-1902, Asn-1940, and Asn-1991 are each glycosylated (N-linked (GlcNAc...) asparagine). N-linked (GlcNAc...) asparagine glycans are attached at residues Asn-2325 and Asn-2464. Residues Asn-3324, Asn-3422, Asn-3444, Asn-3613, Asn-3640, and Asn-3716 are each glycosylated (N-linked (GlcNAc...) asparagine). The region spanning 3790 to 3827 is the EGF-like 1 domain; that stretch reads VHHGCEDDPCPEGSECVSDPWEEKHTCVCPSGRFGQCP. Disulfide bonds link Cys-3794–Cys-3805, Cys-3799–Cys-3816, Cys-3818–Cys-3826, Cys-3976–Cys-4009, Cys-4017–Cys-4028, Cys-4022–Cys-4038, Cys-4040–Cys-4049, Cys-4056–Cys-4067, Cys-4061–Cys-4076, Cys-4078–Cys-4087, Cys-4093–Cys-4104, Cys-4098–Cys-4113, Cys-4115–Cys-4124, Cys-4131–Cys-4142, and Cys-4136–Cys-4151. Residues 3829-4009 enclose the Laminin G-like domain; the sequence is SSSMTLTGNS…EESVDVSPGC (181 aa). EGF-like domains are found at residues 4013–4050, 4052–4088, and 4089–4125; these read ATEDCASNPCQNGGVCNPSPAGGYYCKCSALYIGTHCE, SVNPCSSKPCLYGGTCVVDNGGFVCQCRGLYTGQRCQ, and LSPYCKDEPCKNGGTCFDSLDGAVCQCDSGFRGERCQ. Residues 4127–4163 form the EGF-like 5; calcium-binding domain; that stretch reads DIDECSGNPCLHGALCENTHGSYHCNCSHEYRGRHCE. N-linked (GlcNAc...) asparagine glycosylation occurs at Asn-4152. Cys-4153 and Cys-4162 form a disulfide bridge. The chain crosses the membrane as a helical span at residues 4182-4202; it reads GIGIVVFVAGIFLLVVVFVLC. Topologically, residues 4203–4588 are cytoplasmic; that stretch reads RKMISRKKKH…PLDSQQHTEV (386 aa). The Nuclear localization signal motif lies at 4204–4214; sequence KMISRKKKHQA. Disordered regions lie at residues 4255–4275, 4303–4327, and 4343–4376; these read SYTPSIPSDSRNNLDRNSFEG, SVAPNLPPPPPSNSPSDSDSIQKPS, and LSKKPLEEKPSQPYSARESLSEVQSLSSFQSESC. Positions 4256–4265 are enriched in polar residues; it reads YTPSIPSDSR. Polar residues predominate over residues 4363-4374; it reads SEVQSLSSFQSE. A PTB-like motif motif is present at residues 4378 to 4382; the sequence is DNGYH. Disordered regions lie at residues 4435-4479 and 4565-4588; these read FPPP…SSSR and ESGDDGHFEEVTIPPLDSQQHTEV.

As to quaternary structure, interacts (via the C-terminus 4300-4400 AA) with ATN1. Interacts with RERE. In terms of processing, undergoes proteolytic cleavage. The extracellular domain is cleaved off and the cytoplasmic domain (about 400 AA) shuttles to the nucleus. As to expression, expressed in many epithelial and some endothelial and smooth muscle cells.

It localises to the cell membrane. The protein localises to the nucleus. Its function is as follows. Plays an essential role for cellular polarization, directed cell migration and modulating cell-cell contact. The chain is Protocadherin Fat 1 (FAT1) from Homo sapiens (Human).